Here is a 238-residue protein sequence, read N- to C-terminus: Probable transglycosylase SceD 1 (238 aa).

The first 27 residues, 1–27 (MKKTVVASTLAVGLGVTGFAAGNSADA), serve as a signal peptide directing secretion. Residues 87–97 (TNAPAQETAEQ) show a composition bias toward polar residues. The disordered stretch occupies residues 87–161 (TNAPAQETAE…SEASEGSSVN (75 aa)). Residues 102 to 156 (EQPQQTEQASTEQPAQEAAPQTEETQQPQQEATTQTTSSSNESTSNESSSSEASE) show a composition bias toward low complexity.

Belongs to the transglycosylase family. SceD subfamily.

The protein localises to the secreted. Its function is as follows. Is able to cleave peptidoglycan and affects clumping and separation of bacterial cells. The polypeptide is Probable transglycosylase SceD 1 (sceD1) (Staphylococcus saprophyticus subsp. saprophyticus (strain ATCC 15305 / DSM 20229 / NCIMB 8711 / NCTC 7292 / S-41)).